A 311-amino-acid chain; its full sequence is tRNA-cytidine(32) 2-sulfurtransferase (311 aa).

The PP-loop motif signature appears at 47 to 52; the sequence is SGGKDS. [4Fe-4S] cluster-binding residues include Cys122, Cys125, and Cys213.

The protein belongs to the TtcA family. In terms of assembly, homodimer. Mg(2+) serves as cofactor. [4Fe-4S] cluster is required as a cofactor.

It is found in the cytoplasm. It carries out the reaction cytidine(32) in tRNA + S-sulfanyl-L-cysteinyl-[cysteine desulfurase] + AH2 + ATP = 2-thiocytidine(32) in tRNA + L-cysteinyl-[cysteine desulfurase] + A + AMP + diphosphate + H(+). It participates in tRNA modification. Its function is as follows. Catalyzes the ATP-dependent 2-thiolation of cytidine in position 32 of tRNA, to form 2-thiocytidine (s(2)C32). The sulfur atoms are provided by the cysteine/cysteine desulfurase (IscS) system. In Salmonella paratyphi A (strain ATCC 9150 / SARB42), this protein is tRNA-cytidine(32) 2-sulfurtransferase.